Consider the following 124-residue polypeptide: Large ribosomal subunit protein bL12 (124 aa).

It belongs to the bacterial ribosomal protein bL12 family. In terms of assembly, homodimer. Part of the ribosomal stalk of the 50S ribosomal subunit. Forms a multimeric L10(L12)X complex, where L10 forms an elongated spine to which 2 to 4 L12 dimers bind in a sequential fashion. Binds GTP-bound translation factors.

In terms of biological role, forms part of the ribosomal stalk which helps the ribosome interact with GTP-bound translation factors. Is thus essential for accurate translation. The polypeptide is Large ribosomal subunit protein bL12 (Burkholderia ambifaria (strain MC40-6)).